Here is a 218-residue protein sequence, read N- to C-terminus: MINVLLVDDHELVRAGIRRILEDIKGIKVVGEASCGEDAVKWCRANAVDVVLMDMSMPGIGGLEATRKIARSTADVKIIMLTVHTENPLPAKVMQAGAAGYLSKGAAPQEVVSAIRSVYSGQRYIASDIAQQMALSQIEPEKTESPFASLSERELQIMLMITKGQKVNEISEQLNLSPKTVNSYRYRMFSKLNIHGDVELTHLAIRHGLCNAETLSSQ.

One can recognise a Response regulatory domain in the interval 3 to 119; the sequence is NVLLVDDHEL…EVVSAIRSVY (117 aa). At D54 the chain carries 4-aspartylphosphate. Residues 143–208 form the HTH luxR-type domain; sequence TESPFASLSE…ELTHLAIRHG (66 aa). The segment at residues 167 to 186 is a DNA-binding region (H-T-H motif); it reads VNEISEQLNLSPKTVNSYRY.

Phosphorylated and activated by BarA.

The protein resides in the cytoplasm. Its function is as follows. Member of the two-component regulatory system UvrY/BarA involved in the regulation of carbon metabolism via the CsrA/CsrB regulatory system. UvrY activates the transcription of the untranslated csrB RNA and of barA, in an autoregulatory loop. Mediates the effects of CsrA on csrB RNA by BarA-dependent and BarA-independent mechanisms. This chain is Response regulator UvrY (uvrY), found in Escherichia coli O157:H7.